Here is a 58-residue protein sequence, read N- to C-terminus: MAVPKKKKSKSKRNHRHAVWKGKAALAAQKAISLGKSVLTGKAQGFVYPIDEEEESEE.

This sequence belongs to the bacterial ribosomal protein bL32 family.

The chain is Large ribosomal subunit protein bL32 from Prochlorococcus marinus (strain MIT 9515).